The chain runs to 522 residues: Flavin-dependent halogenase armH1 (522 aa).

Positions 16, 19, and 49 each coordinate FAD. Serine 328 and glycine 329 together coordinate chloride. An FAD-binding site is contributed by isoleucine 330.

This sequence belongs to the flavin-dependent halogenase family.

It catalyses the reaction melleolide F + FADH2 + chloride + O2 = 6'-chloromelleolide F + FAD + 2 H2O + H(+). In terms of biological role, flavin-dependent halogenase involved in the biosynthesis of melleolides, a range of antifungal and phytotoxic polyketide derivatives composed of an orsellinic acid (OA) moiety esterified to various sesquiterpene alcohols. The halogenase catalyzes the transfer of a single chlorine atom to the melleolide backbone, resulting in a 6'-chloromelleolide product. The enzyme acts on free substrate and does not depend on carrier-protein-dependent acceptor molecules. The sequence is that of Flavin-dependent halogenase armH1 from Armillaria mellea (Honey mushroom).